We begin with the raw amino-acid sequence, 717 residues long: Fatty acid oxidation complex subunit alpha (717 aa).

Residues 1–190 (MIHAGNAITV…KDGAVDAVVA (190 aa)) are enoyl-CoA hydratase/isomerase. Asp298 serves as a coordination point for substrate. Positions 313 to 717 (HPVNQAAVLG…MAANNKKFYG (405 aa)) are 3-hydroxyacyl-CoA dehydrogenase. NAD(+) contacts are provided by residues Met326, Asp345, 402 to 404 (VTE), Lys409, and Ser431. The active-site For 3-hydroxyacyl-CoA dehydrogenase activity is the His452. Residue Asn455 participates in NAD(+) binding. Asn502 contacts substrate.

It in the N-terminal section; belongs to the enoyl-CoA hydratase/isomerase family. In the C-terminal section; belongs to the 3-hydroxyacyl-CoA dehydrogenase family. Heterotetramer of two alpha chains (FadB) and two beta chains (FadA).

The catalysed reaction is a (3S)-3-hydroxyacyl-CoA + NAD(+) = a 3-oxoacyl-CoA + NADH + H(+). The enzyme catalyses a (3S)-3-hydroxyacyl-CoA = a (2E)-enoyl-CoA + H2O. It catalyses the reaction a 4-saturated-(3S)-3-hydroxyacyl-CoA = a (3E)-enoyl-CoA + H2O. It carries out the reaction (3S)-3-hydroxybutanoyl-CoA = (3R)-3-hydroxybutanoyl-CoA. The catalysed reaction is a (3Z)-enoyl-CoA = a 4-saturated (2E)-enoyl-CoA. The enzyme catalyses a (3E)-enoyl-CoA = a 4-saturated (2E)-enoyl-CoA. The protein operates within lipid metabolism; fatty acid beta-oxidation. Its function is as follows. Involved in the aerobic and anaerobic degradation of long-chain fatty acids via beta-oxidation cycle. Catalyzes the formation of 3-oxoacyl-CoA from enoyl-CoA via L-3-hydroxyacyl-CoA. It can also use D-3-hydroxyacyl-CoA and cis-3-enoyl-CoA as substrate. The protein is Fatty acid oxidation complex subunit alpha of Acinetobacter baumannii (strain AB307-0294).